A 132-amino-acid polypeptide reads, in one-letter code: uncharacterized protein (132 aa).

3 helical membrane-spanning segments follow: residues Phe19 to Leu39, Ile58 to Met78, and Leu93 to Leu113.

The protein belongs to the bacteriophage holin family. Cp-1 holin subfamily.

The protein resides in the cell membrane. This is an uncharacterized protein from Clostridium perfringens.